A 320-amino-acid polypeptide reads, in one-letter code: D-alanine--D-alanine ligase (320 aa).

Residues 104 to 308 (KRVCLSHGVP…YEDLCVEILR (205 aa)) enclose the ATP-grasp domain. Position 134 to 189 (134 to 189 (AAEFGMPLMLKAPHEGSTIGIAKVETAEGMQAGFDLCAKYDDVVLVEQFVKGRELT)) interacts with ATP. 3 residues coordinate Mg(2+): Asp-261, Glu-275, and Asn-277.

The protein belongs to the D-alanine--D-alanine ligase family. Mg(2+) is required as a cofactor. Mn(2+) serves as cofactor.

The protein resides in the cytoplasm. The enzyme catalyses 2 D-alanine + ATP = D-alanyl-D-alanine + ADP + phosphate + H(+). It participates in cell wall biogenesis; peptidoglycan biosynthesis. Functionally, cell wall formation. The chain is D-alanine--D-alanine ligase from Janthinobacterium sp. (strain Marseille) (Minibacterium massiliensis).